Consider the following 432-residue polypeptide: Glutamyl-tRNA reductase (432 aa).

Substrate contacts are provided by residues 50 to 53 (TCNR), S110, 115 to 117 (ETQ), and Q121. C51 functions as the Nucleophile in the catalytic mechanism. 190–195 (GVGEMS) provides a ligand contact to NADP(+).

It belongs to the glutamyl-tRNA reductase family. As to quaternary structure, homodimer.

It catalyses the reaction (S)-4-amino-5-oxopentanoate + tRNA(Glu) + NADP(+) = L-glutamyl-tRNA(Glu) + NADPH + H(+). It functions in the pathway porphyrin-containing compound metabolism; protoporphyrin-IX biosynthesis; 5-aminolevulinate from L-glutamyl-tRNA(Glu): step 1/2. In terms of biological role, catalyzes the NADPH-dependent reduction of glutamyl-tRNA(Glu) to glutamate 1-semialdehyde (GSA). This chain is Glutamyl-tRNA reductase, found in Sulfurimonas denitrificans (strain ATCC 33889 / DSM 1251) (Thiomicrospira denitrificans (strain ATCC 33889 / DSM 1251)).